Reading from the N-terminus, the 239-residue chain is Probable phosphatase Csac_1188 (239 aa).

Residues His-8, His-10, His-16, His-41, Glu-74, His-102, His-132, Asp-192, and His-194 each contribute to the Zn(2+) site.

It belongs to the PHP family. Zn(2+) is required as a cofactor.

In Caldicellulosiruptor saccharolyticus (strain ATCC 43494 / DSM 8903 / Tp8T 6331), this protein is Probable phosphatase Csac_1188.